The chain runs to 475 residues: Aspartyl/glutamyl-tRNA(Asn/Gln) amidotransferase subunit B (475 aa).

This sequence belongs to the GatB/GatE family. GatB subfamily. As to quaternary structure, heterotrimer of A, B and C subunits.

The enzyme catalyses L-glutamyl-tRNA(Gln) + L-glutamine + ATP + H2O = L-glutaminyl-tRNA(Gln) + L-glutamate + ADP + phosphate + H(+). It carries out the reaction L-aspartyl-tRNA(Asn) + L-glutamine + ATP + H2O = L-asparaginyl-tRNA(Asn) + L-glutamate + ADP + phosphate + 2 H(+). Its function is as follows. Allows the formation of correctly charged Asn-tRNA(Asn) or Gln-tRNA(Gln) through the transamidation of misacylated Asp-tRNA(Asn) or Glu-tRNA(Gln) in organisms which lack either or both of asparaginyl-tRNA or glutaminyl-tRNA synthetases. The reaction takes place in the presence of glutamine and ATP through an activated phospho-Asp-tRNA(Asn) or phospho-Glu-tRNA(Gln). In Chlorobium chlorochromatii (strain CaD3), this protein is Aspartyl/glutamyl-tRNA(Asn/Gln) amidotransferase subunit B.